Consider the following 475-residue polypeptide: MVKTNINKGYVNQIIGPVLDIEFPSGTLPPIYSALKIETEDGIGTVVEVQQLLGDNKVRAVSMRSTDGLKRGVEARDLGGPISVPVGISTLGRIFNVIGEPVDEQGDVSYDETLPIHREAPAFTELETKPSIFETGIKVVDLLAPYRRGGKIGLFGGAGVGKTVLIMELINNIAKAHGGVSVFGGVGERTREGNDLYEEMKESGVINENNFKESKVALVYGQMNEPPGARMRVGLTALTMAEYFRDVNKQDVLLFIDNIFRFTQAGSEVSALLGRMPSAVGYQPTLATEMGALQERITSTTQGSITSIQAVYVPADDLTDPAPATTFAHLDATTVLSRNLAAKGIYPAVDPLDSTSTMLQPGIVSGEHYEIAETVKETLQRYKELQDIIAILGIDELSEEDRLTVARARKVERFLSQPFFVAEIFTGSPGKYVSLEETIKGFTMVLKGELDELPEQAFYLVGNIDEAIAKAETLK.

156–163 (GGAGVGKT) is a binding site for ATP.

This sequence belongs to the ATPase alpha/beta chains family. In terms of assembly, F-type ATPases have 2 components, CF(1) - the catalytic core - and CF(0) - the membrane proton channel. CF(1) has five subunits: alpha(3), beta(3), gamma(1), delta(1), epsilon(1). CF(0) has four main subunits: a(1), b(1), b'(1) and c(9-12).

The protein resides in the plastid. It localises to the chloroplast thylakoid membrane. The catalysed reaction is ATP + H2O + 4 H(+)(in) = ADP + phosphate + 5 H(+)(out). In terms of biological role, produces ATP from ADP in the presence of a proton gradient across the membrane. The catalytic sites are hosted primarily by the beta subunits. This Trieres chinensis (Marine centric diatom) protein is ATP synthase subunit beta, chloroplastic.